The chain runs to 704 residues: ATP-dependent DNA helicase Hel308 (704 aa).

ATP contacts are provided by residues Gln-31 and Ser-49–Thr-56. Residues Arg-36–Asn-200 form the Helicase ATP-binding domain. A DEAH box motif is present at residues Asp-148–His-151. Residues Ala-235–Ile-439 form the Helicase C-terminal domain. The segment at Val-366 to Lys-645 is binds Hjc. The segment at Tyr-432 to Val-644 is required for helicase activity. An inhibits intrinsic ATPase, and helicase region spans residues Pro-646–Ala-704.

It belongs to the helicase family. Hel308 subfamily. As to quaternary structure, monomer; forms a 1:2 complex with Hjc, which may form a complex with Holliday junction DNA. It depends on Mg(2+) as a cofactor.

The enzyme catalyses Couples ATP hydrolysis with the unwinding of duplex DNA by translocating in the 3'-5' direction.. It catalyses the reaction ATP + H2O = ADP + phosphate + H(+). It carries out the reaction Couples ATP hydrolysis with the unwinding of duplex DNA at the replication fork by translocating in the 5'-3' direction. This creates two antiparallel DNA single strands (ssDNA). The leading ssDNA polymer is the template for DNA polymerase III holoenzyme which synthesizes a continuous strand.. Its activity is regulated as follows. Helicase activity is inhibited by Hjc and by PCNA123 and PCNA323. An ATP, Mg(2+)-dependent DNA 3'-5' and 5'-3' helicase that may be involved in repair of stalled replication forks. Stimulated by both ss and dsDNA. Unwinds both leading and lagging strands in replication fork structures, unlike orthologs in P.furiosus and M.thermautotrophicus which only unwind the lagging strand and only have 3'-5' helicase activity. Preferentially binds dsDNA with overhangs or branched DNA. Able to anneal DNA substrates that could form a replication fork-like structure, has replication fork reversal activity (at least in vitro). The chain is ATP-dependent DNA helicase Hel308 from Sulfurisphaera tokodaii (strain DSM 16993 / JCM 10545 / NBRC 100140 / 7) (Sulfolobus tokodaii).